A 384-amino-acid chain; its full sequence is Lipid-A-disaccharide synthase (384 aa).

The protein belongs to the LpxB family.

It catalyses the reaction a lipid X + a UDP-2-N,3-O-bis[(3R)-3-hydroxyacyl]-alpha-D-glucosamine = a lipid A disaccharide + UDP + H(+). Its pathway is bacterial outer membrane biogenesis; LPS lipid A biosynthesis. Its function is as follows. Condensation of UDP-2,3-diacylglucosamine and 2,3-diacylglucosamine-1-phosphate to form lipid A disaccharide, a precursor of lipid A, a phosphorylated glycolipid that anchors the lipopolysaccharide to the outer membrane of the cell. The protein is Lipid-A-disaccharide synthase of Geobacter sulfurreducens (strain ATCC 51573 / DSM 12127 / PCA).